A 334-amino-acid polypeptide reads, in one-letter code: Putative transport protein MJ1177 (334 aa).

A run of 7 helical transmembrane segments spans residues 13–33 (VIVG…DVLA), 61–81 (LAIS…LLTF), 138–158 (IIDV…TFYF), 191–211 (SYKN…ILSY), 234–254 (LLPI…FFLI), 259–279 (KAVF…DFVI), and 293–313 (VLVV…GFAI).

This sequence belongs to the autoinducer-2 exporter (AI-2E) (TC 2.A.86) family.

The protein localises to the cell membrane. The chain is Putative transport protein MJ1177 from Methanocaldococcus jannaschii (strain ATCC 43067 / DSM 2661 / JAL-1 / JCM 10045 / NBRC 100440) (Methanococcus jannaschii).